The sequence spans 335 residues: uncharacterized protein (335 aa).

This is an uncharacterized protein from Acanthamoeba polyphaga mimivirus (APMV).